A 658-amino-acid chain; its full sequence is NADPH-dependent diflavin oxidoreductase 1 (658 aa).

One can recognise a Flavodoxin-like domain in the interval leucine 16–tryptophan 160. FMN contacts are provided by residues threonine 22 to serine 27, serine 69 to glycine 72, leucine 107 to cysteine 116, and aspartate 142. In terms of domain architecture, FAD-binding FR-type spans glutamine 215 to proline 502. Residues arginine 400, arginine 430–serine 433, and glycine 474–threonine 477 each bind FAD. NADP(+) contacts are provided by residues threonine 514, serine 574 to arginine 575, and lysine 580 to glutamine 584. Residue tryptophan 657 coordinates FAD.

The protein belongs to the NADPH-dependent diflavin oxidoreductase NDOR1 family. This sequence in the N-terminal section; belongs to the flavodoxin family. In the C-terminal section; belongs to the flavoprotein pyridine nucleotide cytochrome reductase family. In terms of assembly, interacts with DRE2; as part of the cytosolic iron-sulfur (Fe-S) protein assembly (CIA) machinery. FAD is required as a cofactor. The cofactor is FMN.

Its subcellular location is the cytoplasm. It localises to the mitochondrion. It carries out the reaction 2 oxidized [2Fe-2S]-[protein] + NADPH = 2 reduced [2Fe-2S]-[protein] + NADP(+) + H(+). In terms of biological role, NADPH-dependent reductase which is a central component of the cytosolic iron-sulfur (Fe-S) protein assembly (CIA) machinery. Transfers electrons from NADPH via its FAD and FMN prosthetic groups to the [2Fe-2S] cluster of DRE2, another key component of the CIA machinery. In turn, this reduced cluster provides electrons for assembly of cytosolic iron-sulfur cluster proteins. Positively controls H(2)O(2)-induced cell death. The chain is NADPH-dependent diflavin oxidoreductase 1 from Mycosarcoma maydis (Corn smut fungus).